Here is a 244-residue protein sequence, read N- to C-terminus: Small ribosomal subunit protein uS3 (244 aa).

Residues 38 to 106 enclose the KH type-2 domain; it reads IRKYLNARLA…DIQINIFEVK (69 aa). The disordered stretch occupies residues 217 to 244; the sequence is TQSKESGRGNNGGNNGGGKNFKRKKNNR. Over residues 225–235 the composition is skewed to gly residues; sequence GNNGGNNGGGK.

The protein belongs to the universal ribosomal protein uS3 family. Part of the 30S ribosomal subunit. Forms a tight complex with proteins S10 and S14.

In terms of biological role, binds the lower part of the 30S subunit head. Binds mRNA in the 70S ribosome, positioning it for translation. The protein is Small ribosomal subunit protein uS3 of Bacteroides fragilis (strain ATCC 25285 / DSM 2151 / CCUG 4856 / JCM 11019 / LMG 10263 / NCTC 9343 / Onslow / VPI 2553 / EN-2).